A 209-amino-acid polypeptide reads, in one-letter code: N-(5'-phosphoribosyl)anthranilate isomerase (209 aa).

It belongs to the TrpF family.

The enzyme catalyses N-(5-phospho-beta-D-ribosyl)anthranilate = 1-(2-carboxyphenylamino)-1-deoxy-D-ribulose 5-phosphate. It functions in the pathway amino-acid biosynthesis; L-tryptophan biosynthesis; L-tryptophan from chorismate: step 3/5. The sequence is that of N-(5'-phosphoribosyl)anthranilate isomerase from Staphylococcus carnosus (strain TM300).